The sequence spans 72 residues: U1-sicaritoxin-Sdo1a (72 aa).

The signal sequence occupies residues 1–24 (MMKKFTCFLLCATILCAIFCVSVA). The propeptide occupies 25 to 41 (EKFHKMKSDIERDETPM). 3 disulfide bridges follow: Cys-43/Cys-61, Cys-50/Cys-64, and Cys-60/Cys-69.

In terms of tissue distribution, expressed by the venom gland.

Its subcellular location is the secreted. The chain is U1-sicaritoxin-Sdo1a from Hexophthalma dolichocephala (Afrotropical spider).